Here is a 438-residue protein sequence, read N- to C-terminus: Transcriptional regulator Mb0495 (438 aa).

Residues 1 to 12 (MYSTNRTSQSLS) show a composition bias toward polar residues. Residues 1 to 22 (MYSTNRTSQSLSRKPGRKHQLR) are disordered. Residues 52–73 (VGRDVIAGSTSLSIATVNRQVI) constitute a DNA-binding region (H-T-H motif).

This sequence belongs to the ROK (NagC/XylR) family.

In terms of biological role, positively regulates the expression of PE13 and PPE18. The protein is Transcriptional regulator Mb0495 of Mycobacterium bovis (strain ATCC BAA-935 / AF2122/97).